Consider the following 389-residue polypeptide: Acetyl-CoA:oxalate CoA-transferase (389 aa).

The active site involves His-237.

Homodimer.

The enzyme catalyses oxalate + acetyl-CoA = oxalyl-CoA + acetate. Its function is as follows. Involved in the catabolism of oxalate and in the adapatation to low pH. ACOCT serves to prime the oxalate-induced acid tolerance response (ATR) cycle by producing substrate for oxalyl-CoA decarboxylase (OXC) and formyl-coenzyme A transferase (FCOCT). Catalyzes the reversible conversion of acetyl-CoA and oxalate to oxalyl-CoA and acetate. It can also use formyl-CoA and oxalate to produce oxalyl-CoA and formate with significantly reduced specific activity. This is Acetyl-CoA:oxalate CoA-transferase (uctC) from Acetobacter aceti.